Here is a 698-residue protein sequence, read N- to C-terminus: D-(-)-3-hydroxybutyrate oligomer hydrolase (698 aa).

The signal sequence occupies residues methionine 1–alanine 32. Serine 310 serves as the catalytic Charge relay system.

It belongs to the D-(-)-3-hydroxybutyrate oligomer hydrolase family.

It is found in the secreted. It carries out the reaction (3R)-hydroxybutanoate dimer + H2O = 2 (R)-3-hydroxybutanoate + H(+). The protein operates within lipid metabolism; butanoate metabolism. Its function is as follows. Participates in the degradation of poly-3-hydroxybutyrate (PHB). It works downstream of poly(3-hydroxybutyrate) depolymerase, hydrolyzing D(-)-3-hydroxybutyrate oligomers of various length (3HB-oligomers) into 3HB-monomers. In Burkholderia thailandensis (strain ATCC 700388 / DSM 13276 / CCUG 48851 / CIP 106301 / E264), this protein is D-(-)-3-hydroxybutyrate oligomer hydrolase.